The following is a 309-amino-acid chain: Ribosomal RNA small subunit methyltransferase H (309 aa).

Residues 33-35 (GGH), aspartate 53, phenylalanine 79, aspartate 100, and glutamine 107 contribute to the S-adenosyl-L-methionine site.

This sequence belongs to the methyltransferase superfamily. RsmH family.

It is found in the cytoplasm. The enzyme catalyses cytidine(1402) in 16S rRNA + S-adenosyl-L-methionine = N(4)-methylcytidine(1402) in 16S rRNA + S-adenosyl-L-homocysteine + H(+). In terms of biological role, specifically methylates the N4 position of cytidine in position 1402 (C1402) of 16S rRNA. This chain is Ribosomal RNA small subunit methyltransferase H, found in Clostridium botulinum (strain Langeland / NCTC 10281 / Type F).